We begin with the raw amino-acid sequence, 344 residues long: 2,3,4,5-tetrahydropyridine-2,6-dicarboxylate N-succinyltransferase (344 aa).

Glu-205 is a binding site for Mg(2+). Catalysis depends on Glu-221, which acts as the Acyl-anhydride intermediate. Residues Arg-223, Gly-238, Ser-241, Ala-264, 279-280 (EA), 287-289 (GTK), Lys-304, and 317-320 (RRNS) each bind succinyl-CoA.

This sequence belongs to the type 2 tetrahydrodipicolinate N-succinyltransferase family. Homotrimer. Magnesium ions are not essential for catalysis. serves as cofactor.

The protein localises to the cytoplasm. It catalyses the reaction (S)-2,3,4,5-tetrahydrodipicolinate + succinyl-CoA + H2O = (S)-2-succinylamino-6-oxoheptanedioate + CoA. Its pathway is amino-acid biosynthesis; L-lysine biosynthesis via DAP pathway; LL-2,6-diaminopimelate from (S)-tetrahydrodipicolinate (succinylase route): step 1/3. With respect to regulation, weakly inhibited by D-2-aminopimelate. Its function is as follows. Catalyzes the conversion of the cyclic tetrahydrodipicolinate (THDP) into the acyclic N-succinyl-L-2-amino-6-oxopimelate using succinyl-CoA. Displays succinyl transferase activity with L-2-aminopimelate and succinyl-CoA as substrates. This Pseudomonas aeruginosa (strain ATCC 15692 / DSM 22644 / CIP 104116 / JCM 14847 / LMG 12228 / 1C / PRS 101 / PAO1) protein is 2,3,4,5-tetrahydropyridine-2,6-dicarboxylate N-succinyltransferase.